The sequence spans 287 residues: Phosphoribosylaminoimidazole-succinocarboxamide synthase (287 aa).

It belongs to the SAICAR synthetase family.

The catalysed reaction is 5-amino-1-(5-phospho-D-ribosyl)imidazole-4-carboxylate + L-aspartate + ATP = (2S)-2-[5-amino-1-(5-phospho-beta-D-ribosyl)imidazole-4-carboxamido]succinate + ADP + phosphate + 2 H(+). Its pathway is purine metabolism; IMP biosynthesis via de novo pathway; 5-amino-1-(5-phospho-D-ribosyl)imidazole-4-carboxamide from 5-amino-1-(5-phospho-D-ribosyl)imidazole-4-carboxylate: step 1/2. The protein is Phosphoribosylaminoimidazole-succinocarboxamide synthase of Neisseria meningitidis serogroup A / serotype 4A (strain DSM 15465 / Z2491).